A 442-amino-acid polypeptide reads, in one-letter code: 2-oxoisovalerate dehydrogenase subunit alpha, mitochondrial (442 aa).

A mitochondrion-targeting transit peptide spans 1-42 (MSAAKIWRPSRGLRQAALLLLGRSGVRGLARSHPSRQQQQQF). Residues 30–50 (ARSHPSRQQQQQFPSLDDKPQ) form a disordered region. Thiamine diphosphate is bound by residues tyrosine 155 and arginine 156. Serine 203 is a K(+) binding site. Position 204 (serine 204) interacts with thiamine diphosphate. K(+) contacts are provided by proline 205, threonine 208, and glutamine 209. Residue glutamate 235 participates in Mg(2+) binding. The thiamine diphosphate site is built by glycine 236, alanine 237, and arginine 262. Mg(2+) is bound by residues asparagine 264 and tyrosine 266. A thiamine diphosphate-binding site is contributed by histidine 333. Position 334 is a phosphoserine; by BCKDK (serine 334). Threonine 335 carries the post-translational modification Phosphothreonine. Residues serine 336 and serine 344 each carry the phosphoserine modification. At lysine 353 the chain carries N6-acetyllysine; alternate. Position 353 is an N6-succinyllysine; alternate (lysine 353). Position 377 is an N6-succinyllysine (lysine 377).

The protein belongs to the BCKDHA family. Heterotetramer of 2 alpha/BCKDHA and 2 beta chains/BCKDHB that forms the branched-chain alpha-keto acid decarboxylase (E1) component of the BCKD complex. The branched-chain alpha-ketoacid dehydrogenase is a large complex composed of three major building blocks E1, E2 and E3. It is organized around E2, a 24-meric cubic core composed of DBT, to which are associated 6 to 12 copies of E1, and approximately 6 copies of the dehydrogenase E3, a DLD dimer. Interacts with PPM1K. Requires thiamine diphosphate as cofactor. Mg(2+) serves as cofactor. Post-translationally, phosphorylated at Ser-334 by BCKDK and dephosphorylated by protein phosphatase PPM1K.

It localises to the mitochondrion matrix. The enzyme catalyses N(6)-[(R)-lipoyl]-L-lysyl-[protein] + 3-methyl-2-oxobutanoate + H(+) = N(6)-[(R)-S(8)-2-methylpropanoyldihydrolipoyl]-L-lysyl-[protein] + CO2. Functionally, together with BCKDHB forms the heterotetrameric E1 subunit of the mitochondrial branched-chain alpha-ketoacid dehydrogenase (BCKD) complex. The BCKD complex catalyzes the multi-step oxidative decarboxylation of alpha-ketoacids derived from the branched-chain amino-acids valine, leucine and isoleucine producing CO2 and acyl-CoA which is subsequently utilized to produce energy. The E1 subunit catalyzes the first step with the decarboxylation of the alpha-ketoacid forming an enzyme-product intermediate. A reductive acylation mediated by the lipoylamide cofactor of E2 extracts the acyl group from the E1 active site for the next step of the reaction. This Mus musculus (Mouse) protein is 2-oxoisovalerate dehydrogenase subunit alpha, mitochondrial.